The sequence spans 334 residues: N-acetyl-gamma-glutamyl-phosphate reductase (334 aa).

Cysteine 154 is an active-site residue.

The protein belongs to the NAGSA dehydrogenase family. Type 1 subfamily.

The protein resides in the cytoplasm. It catalyses the reaction N-acetyl-L-glutamate 5-semialdehyde + phosphate + NADP(+) = N-acetyl-L-glutamyl 5-phosphate + NADPH + H(+). It participates in amino-acid biosynthesis; L-arginine biosynthesis; N(2)-acetyl-L-ornithine from L-glutamate: step 3/4. Its function is as follows. Catalyzes the NADPH-dependent reduction of N-acetyl-5-glutamyl phosphate to yield N-acetyl-L-glutamate 5-semialdehyde. This chain is N-acetyl-gamma-glutamyl-phosphate reductase, found in Escherichia coli (strain K12).